A 489-amino-acid chain; its full sequence is Ribulose bisphosphate carboxylase large chain (489 aa).

Substrate is bound by residues asparagine 128 and threonine 178. Residue lysine 180 is the Proton acceptor of the active site. Lysine 182 provides a ligand contact to substrate. Residues lysine 206, aspartate 208, and glutamate 209 each coordinate Mg(2+). Lysine 206 is subject to N6-carboxylysine. Histidine 298 (proton acceptor) is an active-site residue. 3 residues coordinate substrate: arginine 299, histidine 331, and serine 383.

The protein belongs to the RuBisCO large chain family. Type I subfamily. Heterohexadecamer of 8 large chains and 8 small chains. Requires Mg(2+) as cofactor.

It carries out the reaction 2 (2R)-3-phosphoglycerate + 2 H(+) = D-ribulose 1,5-bisphosphate + CO2 + H2O. The catalysed reaction is D-ribulose 1,5-bisphosphate + O2 = 2-phosphoglycolate + (2R)-3-phosphoglycerate + 2 H(+). RuBisCO catalyzes two reactions: the carboxylation of D-ribulose 1,5-bisphosphate, the primary event in carbon dioxide fixation, as well as the oxidative fragmentation of the pentose substrate. Both reactions occur simultaneously and in competition at the same active site. The protein is Ribulose bisphosphate carboxylase large chain of Nitrosospira multiformis (strain ATCC 25196 / NCIMB 11849 / C 71).